The primary structure comprises 1010 residues: MEGAAPPASSGSEVTGAGSGKVDAGGGAAMEERFADLCKSKLGLDESITRQAMQLFKESKSILLSSMSSLGSGSPEEIERFWSAFVLYCVSRLGKAGKGKEDGGISLCQILRAFSLNIVDFFKEMPQFCIKVGSVLAGLYGSDWEKRLELKELQANVVHLSLLSRYYKRAYQELFLLNDAKPPENSAEPNAQASDYYRFGWLLFLVLRIQTFSRFKDLVTSTNGLVSVLAVLIVHIPVRLRNFNIKESSSFAKKSDKGVNLIASLCEKYHTSEDELSKAIEKTNTLIVDILKKKPCPAASECQQDRLSFIDPEGLTYFKNLLEEDSLKLSLLMLEKEYENAINTKGELDERMFANDEDSLLGSGSLSGGAINLPGTKRKYDVMASPAKSITSPSPMSPPRFCASPTGNGYCSSKMAPITPVSTAMTTAKWLRSTISPLPSKPSGELLRFFSACDKDVTDDITRRAGIILGAIFTSSSFGERICTSVRSTNRIDAIWTEQRKMEALKLYYRVLESMCRAETQILSGNNLTSLLSNERFHRCMIACSAELVLATHKTVTMMFPAVLEKTGITAFDLSKVIESFVRHEDTLPRELKRHLNSLEERLLESMAWEKGSSMYNSLIVARPTLSAEINRLGLLAEPMPSLDAIAAHHNISLEGLPPLPFQKQEHSPDKDEVRSPKRACTERRNVLVDNNSFRSPVKDTLKSKLPPLQSAFLSPTRPNPAAGGELCAETGIGVFLSKIAKLAAIRIRGLCERLQLSQQVLERVYSLVQQIIIQQTALFFNRHIDQIILCSIYGVAKISQLALTFKEIIFGYRKQSQCKPQVFRSVYVHWASRSRNGKTGEDHVDIITFYNEVFIPTVKPLLVELGSGTSPNKKNEEKCAADGPYPESPRLSRFPNLPDMSPKKVSAAHNVYVSPLRTSKMDTLLSPSSKSYYACVGESTHAFQSPSKDLKVINNRLNSGKKVSGRLNFDVVSDLVVARSLSDQNSASAAATTADITTKTPVKLEQPDC.

A disordered region spans residues 1-23 (MEGAAPPASSGSEVTGAGSGKVD). A domain A region spans residues 419–619 (TPVSTAMTTA…EKGSSMYNSL (201 aa)). The segment at 419–861 (TPVSTAMTTA…NEVFIPTVKP (443 aa)) is pocket. The segment at 620-730 (IVARPTLSAE…PAAGGELCAE (111 aa)) is spacer. The interval 657–679 (LPPLPFQKQEHSPDKDEVRSPKR) is disordered. Residues 664–679 (KQEHSPDKDEVRSPKR) are compositionally biased toward basic and acidic residues. The segment at 731-861 (TGIGVFLSKI…NEVFIPTVKP (131 aa)) is domain B. The interval 868 to 898 (SGTSPNKKNEEKCAADGPYPESPRLSRFPNL) is disordered.

It belongs to the retinoblastoma protein (RB) family.

The protein resides in the nucleus. Its function is as follows. Regulator of biological processes that recruits a histone deacetylase to control gene transcription. May play a role in the entry into mitosis, negatively regulating the cell proliferation. Formation of stable complexes with geminiviridae replication-associated proteins may create a cellular environment which favors viral DNA replication. This chain is Retinoblastoma-related protein 1 (RBR1), found in Oryza sativa subsp. indica (Rice).